We begin with the raw amino-acid sequence, 503 residues long: Maturase K (503 aa).

It belongs to the intron maturase 2 family. MatK subfamily.

Its subcellular location is the plastid. The protein localises to the chloroplast. Functionally, usually encoded in the trnK tRNA gene intron. Probably assists in splicing its own and other chloroplast group II introns. This chain is Maturase K, found in Eucalyptus globulus (Tasmanian blue gum).